The primary structure comprises 406 residues: Bifunctional enzyme IspD/IspF (406 aa).

The interval 1–247 (MSLIRVNGEA…TLFFNPAKDT (247 aa)) is 2-C-methyl-D-erythritol 4-phosphate cytidylyltransferase. Positions 248–406 (FIGMGFDTHA…HVSMRYKQKL (159 aa)) are 2-C-methyl-D-erythritol 2,4-cyclodiphosphate synthase. Residues aspartate 254 and histidine 256 each coordinate a divalent metal cation. 4-CDP-2-C-methyl-D-erythritol 2-phosphate-binding positions include 254-256 (DTH) and 280-281 (HS). Histidine 288 is an a divalent metal cation binding site. 4-CDP-2-C-methyl-D-erythritol 2-phosphate is bound by residues 302–304 (DIG), 307–311 (FPDND), 378–381 (TTME), phenylalanine 385, and lysine 388.

This sequence in the N-terminal section; belongs to the IspD/TarI cytidylyltransferase family. IspD subfamily. In the C-terminal section; belongs to the IspF family. Requires a divalent metal cation as cofactor.

It carries out the reaction 2-C-methyl-D-erythritol 4-phosphate + CTP + H(+) = 4-CDP-2-C-methyl-D-erythritol + diphosphate. The enzyme catalyses 4-CDP-2-C-methyl-D-erythritol 2-phosphate = 2-C-methyl-D-erythritol 2,4-cyclic diphosphate + CMP. The protein operates within isoprenoid biosynthesis; isopentenyl diphosphate biosynthesis via DXP pathway; isopentenyl diphosphate from 1-deoxy-D-xylulose 5-phosphate: step 2/6. It participates in isoprenoid biosynthesis; isopentenyl diphosphate biosynthesis via DXP pathway; isopentenyl diphosphate from 1-deoxy-D-xylulose 5-phosphate: step 4/6. Its function is as follows. Bifunctional enzyme that catalyzes the formation of 4-diphosphocytidyl-2-C-methyl-D-erythritol from CTP and 2-C-methyl-D-erythritol 4-phosphate (MEP) (IspD), and catalyzes the conversion of 4-diphosphocytidyl-2-C-methyl-D-erythritol 2-phosphate (CDP-ME2P) to 2-C-methyl-D-erythritol 2,4-cyclodiphosphate (ME-CPP) with a corresponding release of cytidine 5-monophosphate (CMP) (IspF). The sequence is that of Bifunctional enzyme IspD/IspF from Helicobacter pylori (strain ATCC 700392 / 26695) (Campylobacter pylori).